We begin with the raw amino-acid sequence, 296 residues long: 4-diphosphocytidyl-2-C-methyl-D-erythritol kinase (296 aa).

Residue Lys-13 is part of the active site. Residue 104–114 coordinates ATP; the sequence is PMGGGIGGGSS. Asp-146 is an active-site residue.

The protein belongs to the GHMP kinase family. IspE subfamily.

The catalysed reaction is 4-CDP-2-C-methyl-D-erythritol + ATP = 4-CDP-2-C-methyl-D-erythritol 2-phosphate + ADP + H(+). It participates in isoprenoid biosynthesis; isopentenyl diphosphate biosynthesis via DXP pathway; isopentenyl diphosphate from 1-deoxy-D-xylulose 5-phosphate: step 3/6. Its function is as follows. Catalyzes the phosphorylation of the position 2 hydroxy group of 4-diphosphocytidyl-2C-methyl-D-erythritol. In Hahella chejuensis (strain KCTC 2396), this protein is 4-diphosphocytidyl-2-C-methyl-D-erythritol kinase.